Reading from the N-terminus, the 343-residue chain is N-acetyl-gamma-glutamyl-phosphate reductase (343 aa).

Residue Cys-146 is part of the active site.

The protein belongs to the NAGSA dehydrogenase family. Type 1 subfamily.

It is found in the cytoplasm. It catalyses the reaction N-acetyl-L-glutamate 5-semialdehyde + phosphate + NADP(+) = N-acetyl-L-glutamyl 5-phosphate + NADPH + H(+). It functions in the pathway amino-acid biosynthesis; L-arginine biosynthesis; N(2)-acetyl-L-ornithine from L-glutamate: step 3/4. In terms of biological role, catalyzes the NADPH-dependent reduction of N-acetyl-5-glutamyl phosphate to yield N-acetyl-L-glutamate 5-semialdehyde. The chain is N-acetyl-gamma-glutamyl-phosphate reductase from Arthrobacter sp. (strain FB24).